Consider the following 505-residue polypeptide: Glutamyl-tRNA(Gln) amidotransferase subunit A, mitochondrial (505 aa).

Active-site charge relay system residues include K76 and S158. The active-site Acyl-ester intermediate is S182.

The protein belongs to the amidase family. GatA subfamily. Subunit of the heterotrimeric GatCAB amidotransferase (AdT) complex, composed of A, B and C subunits.

The protein resides in the mitochondrion. It carries out the reaction L-glutamyl-tRNA(Gln) + L-glutamine + ATP + H2O = L-glutaminyl-tRNA(Gln) + L-glutamate + ADP + phosphate + H(+). Functionally, allows the formation of correctly charged Gln-tRNA(Gln) through the transamidation of misacylated Glu-tRNA(Gln) in the mitochondria. The reaction takes place in the presence of glutamine and ATP through an activated gamma-phospho-Glu-tRNA(Gln). The sequence is that of Glutamyl-tRNA(Gln) amidotransferase subunit A, mitochondrial from Ixodes scapularis (Black-legged tick).